A 539-amino-acid chain; its full sequence is Alpha-aminoadipic semialdehyde dehydrogenase (539 aa).

A mitochondrion-targeting transit peptide spans 1–26; sequence MLRLARPLCVQTVKASKLSRLWSRPA. N6-acetyllysine; alternate is present on residues K86, K94, and K97. 3 positions are modified to N6-succinyllysine; alternate: K86, K94, and K97. Residues 192-194, K218, 258-259, 274-275, 274-279, and 296-297 contribute to the NAD(+) site; these read TAF, GT, GS, GSTQVG, and EL. E296 serves as the catalytic Proton acceptor. Residue C330 is the Nucleophile of the active site. T331 provides a ligand contact to (S)-2-amino-6-oxohexanoate. E427 contacts NAD(+). K462 bears the N6-acetyllysine mark. G489 and A490 together coordinate (S)-2-amino-6-oxohexanoate. K500 is modified (N6-acetyllysine). K537 is subject to N6-succinyllysine.

The protein belongs to the aldehyde dehydrogenase family. Homotetramer. Abundant in kidney, liver, cochlea and outer hair cells but not inner hair cells or vestibular type I hair cells. Very low levels in lung, brain, intestine and pancreas.

The protein resides in the cytoplasm. It localises to the cytosol. The protein localises to the nucleus. Its subcellular location is the mitochondrion. It carries out the reaction nonanal + NAD(+) + H2O = nonanoate + NADH + 2 H(+). It catalyses the reaction (S)-2-amino-6-oxohexanoate + NAD(+) + H2O = L-2-aminoadipate + NADH + 2 H(+). The catalysed reaction is betaine aldehyde + NAD(+) + H2O = glycine betaine + NADH + 2 H(+). The enzyme catalyses an aldehyde + NAD(+) + H2O = a carboxylate + NADH + 2 H(+). It carries out the reaction hexanal + NAD(+) + H2O = hexanoate + NADH + 2 H(+). It catalyses the reaction octanal + NAD(+) + H2O = octanoate + NADH + 2 H(+). The catalysed reaction is (E)-non-2-enal + NAD(+) + H2O = (E)-non-2-enoate + NADH + 2 H(+). The enzyme catalyses (E)-4-hydroxynon-2-enal + NAD(+) + H2O = (E)-4-hydroxynon-2-enoate + NADH + 2 H(+). The protein operates within amine and polyamine biosynthesis; betaine biosynthesis via choline pathway; betaine from betaine aldehyde: step 1/1. Multifunctional enzyme mediating important protective effects. Metabolizes betaine aldehyde to betaine, an important cellular osmolyte and methyl donor. Protects cells from oxidative stress by metabolizing a number of lipid peroxidation-derived aldehydes. Involved in lysine catabolism. The sequence is that of Alpha-aminoadipic semialdehyde dehydrogenase from Rattus norvegicus (Rat).